The following is a 438-amino-acid chain: Porin AaxA (438 aa).

Residues 1-21 (MISFRFLLLSGLCALGISSYA) form the signal peptide.

Belongs to the OprB family.

It is found in the cell outer membrane. In terms of biological role, facilitates L-arginine uptake, as part of the AaxABC system. The arginine uptake by the bacterium in the macrophage may be a virulence factor against the host innate immune response. The sequence is that of Porin AaxA (aaxA) from Chlamydia pneumoniae (Chlamydophila pneumoniae).